A 423-amino-acid chain; its full sequence is Sporulation-regulated protein 28 (423 aa).

The Septin-type G domain occupies 28-342 (KGLQLSILLL…ENYRAKVLTE (315 aa)). Residues 38–45 (GEKGSGKS) form a G1 motif region. Residues 38–45 (GEKGSGKS), G124, 204–212 (KADGLTETE), and R291 each bind GTP. Residues 121 to 124 (LFPG) form a G3 motif region. The segment at 203-206 (PKAD) is G4 motif. Polar residues predominate over residues 360–381 (RGSVSNVSTRRNSASRTLGNPD). The disordered stretch occupies residues 360 to 385 (RGSVSNVSTRRNSASRTLGNPDTNDE). Positions 384-417 (DENAYQIHKEIDEKNRIIEDYQRKIDLLEKMLAA) form a coiled coil.

The protein belongs to the TRAFAC class TrmE-Era-EngA-EngB-Septin-like GTPase superfamily. Septin GTPase family. Interacts with itself. Interacts with CDC11 and SPR3; probably to form a ring at the bud neck.

The protein localises to the membrane. It is found in the bud neck. Functionally, septins are GTPases involved in cytokinesis that assemble into filaments and form a ring at the cleavage site. May act by recruiting MYO1 and HOF1, a protein involved in septation, to the site of cleavage. Septins are also involved in cell morphogenesis, bud site selection, chitin deposition, cell cycle regulation, cell compartmentalization and spore wall formation. This Saccharomyces cerevisiae (strain ATCC 204508 / S288c) (Baker's yeast) protein is Sporulation-regulated protein 28 (SPR28).